A 126-amino-acid polypeptide reads, in one-letter code: Aspartate 1-decarboxylase (126 aa).

The active-site Schiff-base intermediate with substrate; via pyruvic acid is the Ser25. Residue Ser25 is modified to Pyruvic acid (Ser). Thr57 is a binding site for substrate. Residue Tyr58 is the Proton donor of the active site. Residue 73–75 (GGA) participates in substrate binding.

The protein belongs to the PanD family. In terms of assembly, heterooctamer of four alpha and four beta subunits. It depends on pyruvate as a cofactor. In terms of processing, is synthesized initially as an inactive proenzyme, which is activated by self-cleavage at a specific serine bond to produce a beta-subunit with a hydroxyl group at its C-terminus and an alpha-subunit with a pyruvoyl group at its N-terminus.

Its subcellular location is the cytoplasm. The enzyme catalyses L-aspartate + H(+) = beta-alanine + CO2. It participates in cofactor biosynthesis; (R)-pantothenate biosynthesis; beta-alanine from L-aspartate: step 1/1. Its function is as follows. Catalyzes the pyruvoyl-dependent decarboxylation of aspartate to produce beta-alanine. The protein is Aspartate 1-decarboxylase of Xanthomonas campestris pv. campestris (strain ATCC 33913 / DSM 3586 / NCPPB 528 / LMG 568 / P 25).